The primary structure comprises 87 residues: Large ribosomal subunit protein bL31B (87 aa).

The protein belongs to the bacterial ribosomal protein bL31 family. Type B subfamily. In terms of assembly, part of the 50S ribosomal subunit.

This is Large ribosomal subunit protein bL31B from Salinispora arenicola (strain CNS-205).